Consider the following 419-residue polypeptide: UPF0229 protein TERTU_3150 (419 aa).

The segment at 63–111 (IFHHGSGGKNNRVLPGNDRFNGGDHIERPEQGQGGGGNGSGASDSGEGE) is disordered. A compositionally biased stretch (basic and acidic residues) spans 83-92 (NGGDHIERPE).

It belongs to the UPF0229 family.

The polypeptide is UPF0229 protein TERTU_3150 (Teredinibacter turnerae (strain ATCC 39867 / T7901)).